The sequence spans 227 residues: PKHD-type hydroxylase azo0608 (227 aa).

One can recognise a Fe2OG dioxygenase domain in the interval Arg78–Ser178. Fe cation-binding residues include His97, Asp99, and His159. Arg169 provides a ligand contact to 2-oxoglutarate.

Requires Fe(2+) as cofactor. The cofactor is L-ascorbate.

In Azoarcus sp. (strain BH72), this protein is PKHD-type hydroxylase azo0608.